We begin with the raw amino-acid sequence, 166 residues long: MAAIPPDTWQPPNVYLETSMGVIVLELYWKHAPKTCKNFAELARRGYYNGTKFHRIIKDFMIQGGDPTGTGRGGASIYGKQFEDELHPDLKFTGAGILAMANAGPDTNGSQFFVTLAPTQWLDGKHTIFGRVCQGIGMVNRVGMVETNSQDRPVDDVKILKAYPSG.

Positions glutamine 10 to proline 164 constitute a PPIase cyclophilin-type domain. Cyclosporin A-binding positions include histidine 54–glycine 65, threonine 70–glycine 71, alanine 99–glycine 104, glycine 109–phenylalanine 113, threonine 119, and lysine 125. At serine 149 the chain carries Phosphoserine.

It belongs to the cyclophilin-type PPIase family. PPIL1 subfamily. Identified in the spliceosome C complex. Interacts with SNW1/SKIP. Interacts with CDC40/PRP17; this interaction leads to CDC40 isomerization. Interacts with RBM22.

The protein localises to the nucleus. The enzyme catalyses [protein]-peptidylproline (omega=180) = [protein]-peptidylproline (omega=0). With respect to regulation, inhibited by Cyclosporin A. Its function is as follows. Involved in pre-mRNA splicing as component of the spliceosome. PPIases accelerate the folding of proteins. It catalyzes the cis-trans isomerization of proline imidic peptide bonds in oligopeptides. Catalyzes prolyl peptide bond isomerization in CDC40/PRP17. Plays an important role in embryonic brain development; this function is independent of its isomerase activity. This is Peptidyl-prolyl cis-trans isomerase-like 1 (Ppil1) from Mus musculus (Mouse).